We begin with the raw amino-acid sequence, 105 residues long: Vacuolar ATPase assembly integral membrane protein VMA21 homolog (105 aa).

Residues 1 to 26 (MSTKNKKAAGGNGVAPKQTRQQSHDS) are disordered. Over 1 to 36 (MSTKNKKAAGGNGVAPKQTRQQSHDSQDYSSFKTVL) the chain is Cytoplasmic. Residues 37–57 (FYCMLIVFLPVLTFFVLKGFV) form a helical membrane-spanning segment. Residues 58–68 (LDQFLDISEVK) lie on the Lumenal side of the membrane. A helical membrane pass occupies residues 69 to 89 (VNIASAVGAVVALHIALGLYI). Over 90 to 105 (YRAYFGAPGSKGSKTD) the chain is Cytoplasmic.

It belongs to the VMA21 family.

It is found in the endoplasmic reticulum membrane. Its subcellular location is the endoplasmic reticulum-Golgi intermediate compartment membrane. The protein resides in the cytoplasmic vesicle. The protein localises to the COPII-coated vesicle membrane. Functionally, required for the assembly of the V0 complex of the vacuolar ATPase (V-ATPase) in the endoplasmic reticulum. This chain is Vacuolar ATPase assembly integral membrane protein VMA21 homolog, found in Drosophila melanogaster (Fruit fly).